A 404-amino-acid polypeptide reads, in one-letter code: GID complex subunit 9 (404 aa).

The region spanning 116–148 (SRVRLNRLVADYMMANGYHGAAALLCKDSQLEN) is the LisH domain. In terms of domain architecture, CTLH spans 154 to 211 (IYKRYQLIHDSILQQELKEVLSWCSEHRAILKKNNSTLELEVRLQRFIELIKSKKLCQ). The segment at 317–389 (CPVCTPCLND…REGFLRDPYS (73 aa)) adopts an RING-Gid-type zinc-finger fold.

It belongs to the FYV10 family. As to quaternary structure, identified in the GID/CTLH complex. In the absence of stress, the complex exists as an inactive anticipatory complex (GID(Ant)), composed of Gid1, the E3 ubiquitin-ligase Gid2, Gid5, Gid8, and the RING-like subunit Gid9, awaiting a substrate receptor to form the active E3 ligase complex. When cells are shifted to glucose-containing medium, the substrate receptor Gid4 is induced and becomes part of the complex, named GID(SR4). Additionally, Gid7 transforms the GID(SR4) E3 ligase core into a higher-order supramolecular assembly (Chelator-GID(SR4)). Under osmotic or heat stress, the substrate receptor Gid10 is induced and becomes part of the complex, named GID(SR10).

It localises to the cytoplasm. It is found in the nucleus. It catalyses the reaction S-ubiquitinyl-[E2 ubiquitin-conjugating enzyme]-L-cysteine + [acceptor protein]-L-lysine = [E2 ubiquitin-conjugating enzyme]-L-cysteine + N(6)-ubiquitinyl-[acceptor protein]-L-lysine.. The protein operates within protein modification; protein ubiquitination. In terms of biological role, component of the GID E3 ligase complex recruiting N termini and catalyzing ubiquitination of proteins targeted for degradation. GID E3 is regulated through assembly with interchangeable N-degron-binding substrate receptors induced by distinct environmental perturbations. Required for the adaptation to the presence of glucose in the growth medium; mediates in association with the substrate receptor VID24/GID4 the degradation of enzymes involved in gluconeogenesis when cells are shifted to glucose-containing medium. This Schizosaccharomyces pombe (strain 972 / ATCC 24843) (Fission yeast) protein is GID complex subunit 9 (gid9).